The primary structure comprises 353 residues: UDP-3-O-acylglucosamine N-acyltransferase (353 aa).

The active-site Proton acceptor is the His-242.

Belongs to the transferase hexapeptide repeat family. LpxD subfamily. In terms of assembly, homotrimer.

It catalyses the reaction a UDP-3-O-[(3R)-3-hydroxyacyl]-alpha-D-glucosamine + a (3R)-hydroxyacyl-[ACP] = a UDP-2-N,3-O-bis[(3R)-3-hydroxyacyl]-alpha-D-glucosamine + holo-[ACP] + H(+). Its pathway is bacterial outer membrane biogenesis; LPS lipid A biosynthesis. In terms of biological role, catalyzes the N-acylation of UDP-3-O-acylglucosamine using 3-hydroxyacyl-ACP as the acyl donor. Is involved in the biosynthesis of lipid A, a phosphorylated glycolipid that anchors the lipopolysaccharide to the outer membrane of the cell. This Pseudomonas aeruginosa (strain UCBPP-PA14) protein is UDP-3-O-acylglucosamine N-acyltransferase.